Consider the following 155-residue polypeptide: Small ribosomal subunit protein eS19 (155 aa).

Belongs to the eukaryotic ribosomal protein eS19 family. As to quaternary structure, component of the small ribosomal subunit.

The protein localises to the cytoplasm. Component of the small ribosomal subunit. The ribosome is a large ribonucleoprotein complex responsible for the synthesis of proteins in the cell. Required for proper maturation of the small (40S) ribosomal subunit. The sequence is that of Small ribosomal subunit protein eS19 (RPS19) from Entamoeba histolytica (strain ATCC 30459 / HM-1:IMSS / ABRM).